The sequence spans 620 residues: Chaperone protein DnaK (620 aa).

Residue Thr-174 is modified to Phosphothreonine; by autocatalysis. A disordered region spans residues 590 to 620; it reads AAGAGPDMSGAGPQGDTYAGDDVVDGDYREV.

Belongs to the heat shock protein 70 family.

Acts as a chaperone. This chain is Chaperone protein DnaK, found in Lachnoclostridium phytofermentans (strain ATCC 700394 / DSM 18823 / ISDg) (Clostridium phytofermentans).